Here is a 424-residue protein sequence, read N- to C-terminus: Serine hydroxymethyltransferase (424 aa).

Residues L118 and 122-124 (GHL) each bind (6S)-5,6,7,8-tetrahydrofolate. Residue K227 is modified to N6-(pyridoxal phosphate)lysine. 351–353 (SPF) lines the (6S)-5,6,7,8-tetrahydrofolate pocket.

The protein belongs to the SHMT family. In terms of assembly, homodimer. It depends on pyridoxal 5'-phosphate as a cofactor.

It localises to the cytoplasm. It carries out the reaction (6R)-5,10-methylene-5,6,7,8-tetrahydrofolate + glycine + H2O = (6S)-5,6,7,8-tetrahydrofolate + L-serine. Its pathway is one-carbon metabolism; tetrahydrofolate interconversion. The protein operates within amino-acid biosynthesis; glycine biosynthesis; glycine from L-serine: step 1/1. Its function is as follows. Catalyzes the reversible interconversion of serine and glycine with tetrahydrofolate (THF) serving as the one-carbon carrier. This reaction serves as the major source of one-carbon groups required for the biosynthesis of purines, thymidylate, methionine, and other important biomolecules. Also exhibits THF-independent aldolase activity toward beta-hydroxyamino acids, producing glycine and aldehydes, via a retro-aldol mechanism. The polypeptide is Serine hydroxymethyltransferase (Pseudothermotoga lettingae (strain ATCC BAA-301 / DSM 14385 / NBRC 107922 / TMO) (Thermotoga lettingae)).